We begin with the raw amino-acid sequence, 65 residues long: Bacteriocin amylovorin-L (65 aa).

A propeptide spanning residues 1–15 (MKQLNSEQLQNIIGG) is cleaved from the precursor. Residues 39–59 (LGGVWGAVIGGVGGAAVCGLA) traverse the membrane as a helical segment.

Active lactobin is composed of two different peptides, one which is lactobin A.

It localises to the secreted. It is found in the host cell membrane. In terms of biological role, this heat stable bacteriocin inhibits the growth of closely related Lactobacillus species. It may act as a pore-forming protein, creating a channel in the cell membrane. It kills Lactobacillus helveticus ATCC 15009, but displays no activity towards Listeria species. The chain is Bacteriocin amylovorin-L (amyL) from Lactobacillus amylovorus.